The sequence spans 64 residues: Putative antitoxin VapB4 (64 aa).

Belongs to the UPF0165 family.

Its function is as follows. Possibly the antitoxin component of a type II toxin-antitoxin (TA) system. Its cognate toxin is VapC4 (Potential). This Archaeoglobus fulgidus (strain ATCC 49558 / DSM 4304 / JCM 9628 / NBRC 100126 / VC-16) protein is Putative antitoxin VapB4 (vapB4).